Consider the following 463-residue polypeptide: Hexose-6-phosphate:phosphate antiporter (463 aa).

Over 1–24 the chain is Cytoplasmic; sequence MLAFLNQVRKPTLDLPLEVRRKMW. A helical membrane pass occupies residues 25–45; sequence FKPFMQSYLVVFIGYLTMYLI. Residues 46-60 are Periplasmic-facing; the sequence is RKNFNIAQNDMISTY. A helical transmembrane segment spans residues 61 to 81; it reads GLSMTQLGMIGLGFSITYGVG. Over 82–96 the chain is Cytoplasmic; it reads KTLVSYYADGKNTKQ. A helical transmembrane segment spans residues 97–117; that stretch reads FLPFMLILSAICMLGFSASMG. The Periplasmic segment spans residues 118–120; it reads SGS. Residues 121 to 141 traverse the membrane as a helical segment; it reads VSLFLMIAFYALSGFFQSTGG. Residues 142-159 lie on the Cytoplasmic side of the membrane; it reads SCSYSTITKWTPRRKRGT. Residues 160–180 form a helical membrane-spanning segment; sequence FLGFWNISHNLGGAGAAGVAL. Residues 181–189 are Periplasmic-facing; it reads FGANYLFDG. A helical transmembrane segment spans residues 190–210; it reads HVIGMFIFPSIIALIVGFIGL. Over 211–259 the chain is Cytoplasmic; it reads RYGSDSPESYGLGKAEELFGEEISEEDKETESTDMTKWQIFVEYVLKNK. Residues 260 to 280 form a helical membrane-spanning segment; sequence VIWLLCFANIFLYVVRIGIDQ. The Periplasmic portion of the chain corresponds to 281–297; it reads WSTVYAFQELKLSKAVA. A helical membrane pass occupies residues 298–318; sequence IQGFTLFEAGALVGTLLWGWL. Over 319–326 the chain is Cytoplasmic; sequence SDLANGRR. Residues 327–347 form a helical membrane-spanning segment; the sequence is GLVACIALALIIATLGVYQHA. Topologically, residues 348–357 are periplasmic; sequence SNEYIYLASL. The chain crosses the membrane as a helical span at residues 358–378; that stretch reads FALGFLVFGPQLLIGVAAVGF. At 379–382 the chain is on the cytoplasmic side; it reads VPKK. The chain crosses the membrane as a helical span at residues 383 to 403; it reads AIGAADGIKGTFAYLIGDSFA. Residues 404–425 are Periplasmic-facing; the sequence is KLGLGMIADGTPVFGLTGWAGT. A helical membrane pass occupies residues 426–446; that stretch reads FAALDIAAIGCICLMAIVAVM. The Cytoplasmic portion of the chain corresponds to 447–463; that stretch reads EERKIRREKKIQQLTVA.

The protein belongs to the major facilitator superfamily. Organophosphate:Pi antiporter (OPA) (TC 2.A.1.4) family.

The protein resides in the cell inner membrane. Mediates the exchange of external hexose 6-phosphate and internal inorganic phosphate. The polypeptide is Hexose-6-phosphate:phosphate antiporter (uhpT) (Escherichia coli O157:H7).